Consider the following 157-residue polypeptide: Snaclec 3 (157 aa).

Positions 1–23 (MGRLIFLSFGWLVVFLSLSGTGA) are cleaved as a signal peptide. Disulfide bonds link C27–C38, C55–C153, and C128–C145. Residues 34–154 (YGQHCYRAFS…CAGHYPFICK (121 aa)) enclose the C-type lectin domain.

Belongs to the snaclec family. Heterodimer; disulfide-linked. Expressed by the venom gland.

It is found in the secreted. Its function is as follows. Interferes with one step of hemostasis (modulation of platelet aggregation, or coagulation cascade, for example). This is Snaclec 3 from Bitis gabonica (Gaboon adder).